The sequence spans 358 residues: UDP-N-acetylglucosamine--N-acetylmuramyl-(pentapeptide) pyrophosphoryl-undecaprenol N-acetylglucosamine transferase (358 aa).

UDP-N-acetyl-alpha-D-glucosamine-binding residues include S196 and Q287.

Belongs to the glycosyltransferase 28 family. MurG subfamily.

Its subcellular location is the cell membrane. It carries out the reaction Mur2Ac(oyl-L-Ala-gamma-D-Glu-L-Lys-D-Ala-D-Ala)-di-trans,octa-cis-undecaprenyl diphosphate + UDP-N-acetyl-alpha-D-glucosamine = beta-D-GlcNAc-(1-&gt;4)-Mur2Ac(oyl-L-Ala-gamma-D-Glu-L-Lys-D-Ala-D-Ala)-di-trans,octa-cis-undecaprenyl diphosphate + UDP + H(+). It functions in the pathway cell wall biogenesis; peptidoglycan biosynthesis. Its function is as follows. Cell wall formation. Catalyzes the transfer of a GlcNAc subunit on undecaprenyl-pyrophosphoryl-MurNAc-pentapeptide (lipid intermediate I) to form undecaprenyl-pyrophosphoryl-MurNAc-(pentapeptide)GlcNAc (lipid intermediate II). The polypeptide is UDP-N-acetylglucosamine--N-acetylmuramyl-(pentapeptide) pyrophosphoryl-undecaprenol N-acetylglucosamine transferase (Streptococcus uberis (strain ATCC BAA-854 / 0140J)).